Consider the following 364-residue polypeptide: Guanine nucleotide-binding protein alpha-8 subunit (364 aa).

The N-myristoyl glycine moiety is linked to residue Gly-2. Cys-5 carries the S-palmitoyl cysteine lipid modification. The G-alpha domain maps to 38-364; the sequence is KILKLLILGP…QHTMQKVGIQ (327 aa). Residues 41 to 54 form a G1 motif region; sequence KLLILGPGESGKST. Residues 46–53, 186–192, 211–215, 280–283, and Ala-336 contribute to the GTP site; these read GPGESGKS, LKSRVPT, DVGGQ, and NKID. 2 residues coordinate Mg(2+): Ser-53 and Thr-192. The interval 184–192 is G2 motif; that stretch reads DILKSRVPT. The interval 207 to 216 is G3 motif; sequence FKIFDVGGQR. The interval 276–283 is G4 motif; that stretch reads ILFLNKID. The segment at 334 to 339 is G5 motif; that stretch reads TCATDT.

This sequence belongs to the G-alpha family. As to quaternary structure, g proteins are composed of 3 units; alpha, beta and gamma. The alpha chain contains the guanine nucleotide binding site.

Guanine nucleotide-binding proteins (G proteins) are involved as modulators or transducers in various transmembrane signaling systems. The sequence is that of Guanine nucleotide-binding protein alpha-8 subunit (gpa-8) from Caenorhabditis briggsae.